The chain runs to 270 residues: Glutamate racemase (270 aa).

Substrate-binding positions include 14–15 (DS) and 46–47 (YG). Cys77 (proton donor/acceptor) is an active-site residue. 78 to 79 (NT) is a substrate binding site. Cys186 acts as the Proton donor/acceptor in catalysis. 187 to 188 (TH) contributes to the substrate binding site.

Belongs to the aspartate/glutamate racemases family.

The catalysed reaction is L-glutamate = D-glutamate. It functions in the pathway cell wall biogenesis; peptidoglycan biosynthesis. Provides the (R)-glutamate required for cell wall biosynthesis. This chain is Glutamate racemase, found in Trichodesmium erythraeum (strain IMS101).